Reading from the N-terminus, the 544-residue chain is MDSFSYSSMKSMLIQARGSLNSRLSEFEPLVLLLVPLVSLFLAQIIGSVFGVVHEKGLKACLIGFIMGLLKMIPGVQNYIDAEKQKVVDQLQSGSSSKKKNKTEVLPVKGLGVEVLEKMENEKRNDAIWQGKCSGTVYIGGAESEGHFSLINQACSMFAHTNPLHIDVFQSVVRFESEVVAMTAALLGSKETASGGQICGNMTSGGTESIVLAVKSSRDYMKYKKGITRPEMIIPESGHSAYDKAAQYFKIKLWRVPVDKDFRADVKATRRHINRNTIMIVGSAPGFPHGIIDPIEELGQLALSYGICFHVDLCLGGFVLPFARKLGYQIPPFDFSVQGVTSISVDVHKYGLAPKGTSTVLYRNHEIRKHQFVAVTEWSGGLYVSPTIAGSRPGSLVAGAWAAMMSLGEEGYLQNTSKIMEASKRLEEGVREIHELFVIGKPDMTIVAFGSKALDIFEVNDIMSSKGWHLNALQRPNSIHICITLQHVPVVDDFLRDLREAVETVKANPGPITGGLAPIYGAAGKMPDRGMVNELLVSFMDSQY.

The Lumenal portion of the chain corresponds to 1-29 (MDSFSYSSMKSMLIQARGSLNSRLSEFEP). A helical; Signal-anchor for type III membrane protein transmembrane segment spans residues 30-50 (LVLLLVPLVSLFLAQIIGSVF). Residues 51-544 (GVVHEKGLKA…LLVSFMDSQY (494 aa)) are Cytoplasmic-facing. Lysine 349 carries the post-translational modification N6-(pyridoxal phosphate)lysine.

It belongs to the group II decarboxylase family. Sphingosine-1-phosphate lyase subfamily. It depends on pyridoxal 5'-phosphate as a cofactor. Expressed in the peripheral parts of leaves and the bases of trichomes.

The protein resides in the endoplasmic reticulum membrane. It carries out the reaction sphinganine 1-phosphate = hexadecanal + phosphoethanolamine. It participates in lipid metabolism; sphingolipid metabolism. Cleaves phosphorylated sphingoid bases (PSBs), such as sphingosine-1-phosphate, into fatty aldehydes and phosphoethanolamine. May play a minor role in maintenance of sphingolipid metabolism during normal plant development and growth, but be required for maintaining sphingoid long chain bases (LCB) and their phosphorylated derivatives (LCB-P) levels when sphingolipid metabolism is perturbed. May play a role in dehydration stress. The chain is Sphingosine-1-phosphate lyase (DPL1) from Arabidopsis thaliana (Mouse-ear cress).